Reading from the N-terminus, the 238-residue chain is Probable transcriptional regulatory protein STER_0242 (238 aa).

This sequence belongs to the TACO1 family. YeeN subfamily.

The protein localises to the cytoplasm. The protein is Probable transcriptional regulatory protein STER_0242 of Streptococcus thermophilus (strain ATCC BAA-491 / LMD-9).